The chain runs to 906 residues: Valine--tRNA ligase (906 aa).

Residues 43–53 (PNVTGSLHIGH) carry the 'HIGH' region motif. The 'KMSKS' region signature appears at 548-552 (KMSKS). Lys551 lines the ATP pocket. A coiled-coil region spans residues 842-905 (EKARLTKDIA…EAALSRLASV (64 aa)).

Belongs to the class-I aminoacyl-tRNA synthetase family. ValS type 1 subfamily. Monomer.

It is found in the cytoplasm. The catalysed reaction is tRNA(Val) + L-valine + ATP = L-valyl-tRNA(Val) + AMP + diphosphate. Functionally, catalyzes the attachment of valine to tRNA(Val). As ValRS can inadvertently accommodate and process structurally similar amino acids such as threonine, to avoid such errors, it has a 'posttransfer' editing activity that hydrolyzes mischarged Thr-tRNA(Val) in a tRNA-dependent manner. The protein is Valine--tRNA ligase of Caulobacter vibrioides (strain ATCC 19089 / CIP 103742 / CB 15) (Caulobacter crescentus).